The primary structure comprises 1113 residues: Translation initiation factor IF-2 (1113 aa).

4 stretches are compositionally biased toward polar residues: residues 56–72 (QSNQSINNKTKQNSSKE), 129–139 (KANTSNQSKGV), 162–187 (LENNASKQNIEDNNNFQERSPRTQLV), and 194–205 (TKNNEPPQQKTS). Disordered stretches follow at residues 56 to 446 (QSNQ…IGEN) and 470 to 504 (LARPAKPKSTKKSNSKATVVTRKRKKESTRQRQRR). A compositionally biased stretch (low complexity) spans 248–265 (PVQPRTQNNQNRQRIPNK). A compositionally biased stretch (basic and acidic residues) spans 415–429 (RRSDWDDAAKLEALR). Basic residues-rich tracts occupy residues 474-483 (AKPKSTKKSN) and 490-504 (TRKRKKESTRQRQRR). In terms of domain architecture, tr-type G spans 605–777 (RRPPVVTVMG…VLLVTEVEDL (173 aa)). The interval 614 to 621 (GHVDHGKT) is G1. Position 614–621 (614–621 (GHVDHGKT)) interacts with GTP. Residues 639 to 643 (GITQH) form a G2 region. A G3 region spans residues 664–667 (DTPG). GTP contacts are provided by residues 664 to 668 (DTPGH) and 718 to 721 (NKID). The G4 stretch occupies residues 718–721 (NKID). Residues 754–756 (SAI) form a G5 region.

It belongs to the TRAFAC class translation factor GTPase superfamily. Classic translation factor GTPase family. IF-2 subfamily.

Its subcellular location is the cytoplasm. In terms of biological role, one of the essential components for the initiation of protein synthesis. Protects formylmethionyl-tRNA from spontaneous hydrolysis and promotes its binding to the 30S ribosomal subunits. Also involved in the hydrolysis of GTP during the formation of the 70S ribosomal complex. This Prochlorococcus marinus (strain MIT 9211) protein is Translation initiation factor IF-2.